Consider the following 86-residue polypeptide: Cell division topological specificity factor (86 aa).

It belongs to the MinE family.

In terms of biological role, prevents the cell division inhibition by proteins MinC and MinD at internal division sites while permitting inhibition at polar sites. This ensures cell division at the proper site by restricting the formation of a division septum at the midpoint of the long axis of the cell. This chain is Cell division topological specificity factor, found in Rhizobium rhizogenes (strain K84 / ATCC BAA-868) (Agrobacterium radiobacter).